A 104-amino-acid chain; its full sequence is MPRQEPKQPGYVCPTTGRVAVLVKDYADSDLNGDASAYWFNPEAEGWGMDPWKLVEGVDPHTQGCSMDVCFADGSSKTVGPLMTFFLSAKDAARLAALKGQRQE.

This chain is Protein KleF (kleF), found in Escherichia coli.